The primary structure comprises 271 residues: Mannosyl-3-phosphoglycerate phosphatase (271 aa).

The active-site Nucleophile is Asp13. Mg(2+) contacts are provided by Asp13, Asp15, and Asp214.

Belongs to the HAD-like hydrolase superfamily. MPGP family. It depends on Mg(2+) as a cofactor.

The protein localises to the cytoplasm. The enzyme catalyses 2-O-(alpha-D-mannosyl)-3-phosphoglycerate + H2O = (2R)-2-O-(alpha-D-mannosyl)-glycerate + phosphate. The protein is Mannosyl-3-phosphoglycerate phosphatase of Escherichia coli O7:K1 (strain IAI39 / ExPEC).